We begin with the raw amino-acid sequence, 424 residues long: Insertion element IS2A uncharacterized 48.2 kDa protein (424 aa).

The 184-residue stretch at 229–412 (KPAVPPSKRA…SPREYLRHGA (184 aa)) folds into the Integrase catalytic domain.

This sequence belongs to the transposase 8 family.

The sequence is that of Insertion element IS2A uncharacterized 48.2 kDa protein from Escherichia coli.